Reading from the N-terminus, the 404-residue chain is Peroxisomal biogenesis factor 9 (404 aa).

Helical transmembrane passes span F73–F93, L94–G114, and F149–V169. Positions D180–S214 are disordered. A compositionally biased stretch (polar residues) spans G181–S198. Residues F349–L369 form a helical membrane-spanning segment.

The protein resides in the peroxisome membrane. Its function is as follows. Essential for the import of peroxisomal matrix proteins. The polypeptide is Peroxisomal biogenesis factor 9 (PEX9) (Yarrowia lipolytica (strain CLIB 122 / E 150) (Yeast)).